Here is a 417-residue protein sequence, read N- to C-terminus: Serine hydroxymethyltransferase (417 aa).

Residues Leu120 and Gly124–Leu126 each bind (6S)-5,6,7,8-tetrahydrofolate. An N6-(pyridoxal phosphate)lysine modification is found at Lys229. Ser354 to Phe356 provides a ligand contact to (6S)-5,6,7,8-tetrahydrofolate.

This sequence belongs to the SHMT family. In terms of assembly, homodimer. Pyridoxal 5'-phosphate is required as a cofactor.

It localises to the cytoplasm. It carries out the reaction (6R)-5,10-methylene-5,6,7,8-tetrahydrofolate + glycine + H2O = (6S)-5,6,7,8-tetrahydrofolate + L-serine. The protein operates within one-carbon metabolism; tetrahydrofolate interconversion. It participates in amino-acid biosynthesis; glycine biosynthesis; glycine from L-serine: step 1/1. Functionally, catalyzes the reversible interconversion of serine and glycine with tetrahydrofolate (THF) serving as the one-carbon carrier. This reaction serves as the major source of one-carbon groups required for the biosynthesis of purines, thymidylate, methionine, and other important biomolecules. Also exhibits THF-independent aldolase activity toward beta-hydroxyamino acids, producing glycine and aldehydes, via a retro-aldol mechanism. This Acinetobacter radioresistens protein is Serine hydroxymethyltransferase.